A 128-amino-acid polypeptide reads, in one-letter code: Putative pre-16S rRNA nuclease (128 aa).

The protein belongs to the YqgF nuclease family.

It is found in the cytoplasm. Functionally, could be a nuclease involved in processing of the 5'-end of pre-16S rRNA. This Campylobacter lari (strain RM2100 / D67 / ATCC BAA-1060) protein is Putative pre-16S rRNA nuclease.